The sequence spans 261 residues: 5'-nucleotidase SurE (261 aa).

Positions 12, 13, 43, and 100 each coordinate a divalent metal cation.

This sequence belongs to the SurE nucleotidase family. A divalent metal cation is required as a cofactor.

The protein localises to the cytoplasm. The enzyme catalyses a ribonucleoside 5'-phosphate + H2O = a ribonucleoside + phosphate. Its function is as follows. Nucleotidase that shows phosphatase activity on nucleoside 5'-monophosphates. The polypeptide is 5'-nucleotidase SurE (Protochlamydia amoebophila (strain UWE25)).